We begin with the raw amino-acid sequence, 249 residues long: ATP synthase subunit a (249 aa).

The next 6 membrane-spanning stretches (helical) occupy residues 33–53 (YMLI…AQLV), 83–103 (FFPL…IGII), 113–133 (LIVT…YGVA), 139–159 (FFSI…VMFI), 188–208 (VFAG…WVGG), and 216–236 (VALY…FAIL).

It belongs to the ATPase A chain family. F-type ATPases have 2 components, CF(1) - the catalytic core - and CF(0) - the membrane proton channel. CF(1) has five subunits: alpha(3), beta(3), gamma(1), delta(1), epsilon(1). CF(0) has three main subunits: a(1), b(2) and c(9-12). The alpha and beta chains form an alternating ring which encloses part of the gamma chain. CF(1) is attached to CF(0) by a central stalk formed by the gamma and epsilon chains, while a peripheral stalk is formed by the delta and b chains.

The protein resides in the cell inner membrane. Key component of the proton channel; it plays a direct role in the translocation of protons across the membrane. The protein is ATP synthase subunit a of Bradyrhizobium diazoefficiens (strain JCM 10833 / BCRC 13528 / IAM 13628 / NBRC 14792 / USDA 110).